The sequence spans 329 residues: 4-hydroxy-3-methylbut-2-enyl diphosphate reductase 1 (329 aa).

Cysteine 29 is a binding site for [4Fe-4S] cluster. 2 residues coordinate (2E)-4-hydroxy-3-methylbut-2-enyl diphosphate: histidine 58 and histidine 95. 2 residues coordinate dimethylallyl diphosphate: histidine 58 and histidine 95. Isopentenyl diphosphate contacts are provided by histidine 58 and histidine 95. [4Fe-4S] cluster is bound at residue cysteine 117. A (2E)-4-hydroxy-3-methylbut-2-enyl diphosphate-binding site is contributed by histidine 145. A dimethylallyl diphosphate-binding site is contributed by histidine 145. Isopentenyl diphosphate is bound at residue histidine 145. Residue glutamate 147 is the Proton donor of the active site. (2E)-4-hydroxy-3-methylbut-2-enyl diphosphate is bound at residue threonine 185. Cysteine 215 serves as a coordination point for [4Fe-4S] cluster. The (2E)-4-hydroxy-3-methylbut-2-enyl diphosphate site is built by serine 243, serine 244, asparagine 245, and serine 287. Residues serine 243, serine 244, asparagine 245, and serine 287 each coordinate dimethylallyl diphosphate. Residues serine 243, serine 244, asparagine 245, and serine 287 each coordinate isopentenyl diphosphate.

Belongs to the IspH family. It depends on [4Fe-4S] cluster as a cofactor.

The enzyme catalyses isopentenyl diphosphate + 2 oxidized [2Fe-2S]-[ferredoxin] + H2O = (2E)-4-hydroxy-3-methylbut-2-enyl diphosphate + 2 reduced [2Fe-2S]-[ferredoxin] + 2 H(+). It carries out the reaction dimethylallyl diphosphate + 2 oxidized [2Fe-2S]-[ferredoxin] + H2O = (2E)-4-hydroxy-3-methylbut-2-enyl diphosphate + 2 reduced [2Fe-2S]-[ferredoxin] + 2 H(+). It functions in the pathway isoprenoid biosynthesis; dimethylallyl diphosphate biosynthesis; dimethylallyl diphosphate from (2E)-4-hydroxy-3-methylbutenyl diphosphate: step 1/1. It participates in isoprenoid biosynthesis; isopentenyl diphosphate biosynthesis via DXP pathway; isopentenyl diphosphate from 1-deoxy-D-xylulose 5-phosphate: step 6/6. Functionally, catalyzes the conversion of 1-hydroxy-2-methyl-2-(E)-butenyl 4-diphosphate (HMBPP) into a mixture of isopentenyl diphosphate (IPP) and dimethylallyl diphosphate (DMAPP). Acts in the terminal step of the DOXP/MEP pathway for isoprenoid precursor biosynthesis. In Mycobacterium tuberculosis (strain CDC 1551 / Oshkosh), this protein is 4-hydroxy-3-methylbut-2-enyl diphosphate reductase 1.